A 702-amino-acid polypeptide reads, in one-letter code: Polyribonucleotide nucleotidyltransferase (702 aa).

Residues D485 and D491 each contribute to the Mg(2+) site. The KH domain occupies 552 to 612; that stretch reads PRTEIICIDP…EGVKKAISII (61 aa). Positions 622–690 constitute an S1 motif domain; that stretch reads GEIYLGKVTK…NQGRINLSRK (69 aa).

It belongs to the polyribonucleotide nucleotidyltransferase family. The cofactor is Mg(2+).

It localises to the cytoplasm. It catalyses the reaction RNA(n+1) + phosphate = RNA(n) + a ribonucleoside 5'-diphosphate. In terms of biological role, involved in mRNA degradation. Catalyzes the phosphorolysis of single-stranded polyribonucleotides processively in the 3'- to 5'-direction. The protein is Polyribonucleotide nucleotidyltransferase of Clostridium botulinum (strain ATCC 19397 / Type A).